The following is a 194-amino-acid chain: uncharacterized protein (194 aa).

Disordered regions lie at residues 1–72 (MAAK…PAAE) and 113–194 (VLIP…SLAV). Basic and acidic residues predominate over residues 26-39 (AEGRSSEGRKERTA). A compositionally biased stretch (polar residues) spans 146–171 (GSSSTSRNQVASLAYRTQNTAASQPR).

This is an uncharacterized protein from Homo sapiens (Human).